The primary structure comprises 197 residues: Guanylate kinase (197 aa).

The Guanylate kinase-like domain occupies 7-185; that stretch reads GLIIILSSPS…TLKKIHEIIV (179 aa). 14–21 is an ATP binding site; sequence SPSGTGKS.

This sequence belongs to the guanylate kinase family.

It is found in the cytoplasm. It catalyses the reaction GMP + ATP = GDP + ADP. Essential for recycling GMP and indirectly, cGMP. The chain is Guanylate kinase (gmk) from Rickettsia prowazekii (strain Madrid E).